The primary structure comprises 432 residues: Acyl-CoA dehydrogenase AFT10-1 (432 aa).

The protein belongs to the acyl-CoA dehydrogenase family. It depends on FAD as a cofactor.

The protein operates within mycotoxin biosynthesis. Functionally, acyl-CoA dehydrogenase; part of the gene clusters that mediate the biosynthesis of the host-selective toxins (HSTs) AF-toxins responsible for Alternaria black spot of strawberry disease by the strawberry pathotype. AF-toxin I and III are valine derivatives of 2,3-dyhydroxy-isovaleric acid and 2-hydroxy-isovaleric acid respectively, while AF II is an isoleucine derivative of 2-hydroxy-valeric acid. These derivatives are bound to a 9,10-epoxy-8-hydroxy-9-methyl-decatrienoic acid (EDA) moiety. On cellular level, AF-toxins affect plasma membrane of susceptible cells and cause a sudden increase in loss of K(+) after a few minutes of toxin treatment. The aldo-keto reductase AFTS1 catalyzes the conversion of 2-keto-isovaleric acid (2-KIV) to 2-hydroxy-isovaleric acid (2-HIV) by reduction of its ketone to an alcohol. The acyl-CoA ligase AFT1, the hydrolase AFT2 and the enoyl-CoA hydratases AFT3 and AFT6, but also the polyketide synthase AFT9, the acyl-CoA dehydrogenase AFT10, the cytochrome P450 monooxygenase AFT11 and the oxidoreductase AFT12 are all involved in the biosynthesis of the AK-, AF- and ACT-toxin common EDA structural moiety. The exact function of each enzyme, and of additional enzymes identified within the AF-toxin clusters have still to be determined. This is Acyl-CoA dehydrogenase AFT10-1 from Alternaria alternata (Alternaria rot fungus).